The chain runs to 209 residues: A-type ATP synthase subunit D (209 aa).

This sequence belongs to the V-ATPase D subunit family. As to quaternary structure, has multiple subunits with at least A(3), B(3), C, D, E, F, H, I and proteolipid K(x).

It is found in the cell membrane. In terms of biological role, component of the A-type ATP synthase that produces ATP from ADP in the presence of a proton gradient across the membrane. This chain is A-type ATP synthase subunit D, found in Archaeoglobus fulgidus (strain ATCC 49558 / DSM 4304 / JCM 9628 / NBRC 100126 / VC-16).